The primary structure comprises 114 residues: Small ribosomal subunit protein bS6 (114 aa).

Belongs to the bacterial ribosomal protein bS6 family.

Binds together with bS18 to 16S ribosomal RNA. The chain is Small ribosomal subunit protein bS6 from Protochlamydia amoebophila (strain UWE25).